The sequence spans 117 residues: Large ribosomal subunit protein uL22 (117 aa).

Belongs to the universal ribosomal protein uL22 family. In terms of assembly, part of the 50S ribosomal subunit.

This protein binds specifically to 23S rRNA; its binding is stimulated by other ribosomal proteins, e.g. L4, L17, and L20. It is important during the early stages of 50S assembly. It makes multiple contacts with different domains of the 23S rRNA in the assembled 50S subunit and ribosome. In terms of biological role, the globular domain of the protein is located near the polypeptide exit tunnel on the outside of the subunit, while an extended beta-hairpin is found that lines the wall of the exit tunnel in the center of the 70S ribosome. This is Large ribosomal subunit protein uL22 from Staphylococcus epidermidis (strain ATCC 35984 / DSM 28319 / BCRC 17069 / CCUG 31568 / BM 3577 / RP62A).